The primary structure comprises 206 residues: FMN-dependent NADH:quinone oxidoreductase 1 (206 aa).

Residues serine 10 and 16–18 contribute to the FMN site; that span reads SLS.

It belongs to the azoreductase type 1 family. In terms of assembly, homodimer. Requires FMN as cofactor.

It carries out the reaction 2 a quinone + NADH + H(+) = 2 a 1,4-benzosemiquinone + NAD(+). The enzyme catalyses N,N-dimethyl-1,4-phenylenediamine + anthranilate + 2 NAD(+) = 2-(4-dimethylaminophenyl)diazenylbenzoate + 2 NADH + 2 H(+). Its function is as follows. Quinone reductase that provides resistance to thiol-specific stress caused by electrophilic quinones. Also exhibits azoreductase activity. Catalyzes the reductive cleavage of the azo bond in aromatic azo compounds to the corresponding amines. In Burkholderia lata (strain ATCC 17760 / DSM 23089 / LMG 22485 / NCIMB 9086 / R18194 / 383), this protein is FMN-dependent NADH:quinone oxidoreductase 1.